The sequence spans 302 residues: DNA-binding transcriptional activator HetR (302 aa).

Ser153 is an active-site residue.

Belongs to the peptidase S48 family. Homodimer; disulfide-linked.

Its function is as follows. Might be involved in temporal and/or spatial regulation of nitrogen fixation. Dimerization is required for DNA-binding. Has both a protease and a DNA-binding activity. This chain is DNA-binding transcriptional activator HetR, found in Trichodesmium erythraeum (strain IMS101).